The primary structure comprises 720 residues: Catalase-peroxidase (720 aa).

Residues 94-222 constitute a cross-link (tryptophyl-tyrosyl-methioninium (Trp-Tyr) (with M-248)); the sequence is WHAAGTYRIA…LAAVTMGLIY (129 aa). Residue His-95 is the Proton acceptor of the active site. Residues 222–248 constitute a cross-link (tryptophyl-tyrosyl-methioninium (Tyr-Met) (with W-94)); sequence YVNPEGVDGNPDPLKTAHDVRVTFARM. Residue His-263 coordinates heme b.

It belongs to the peroxidase family. Peroxidase/catalase subfamily. Homodimer. It depends on heme b as a cofactor. Post-translationally, formation of the three residue Trp-Tyr-Met cross-link is important for the catalase, but not the peroxidase activity of the enzyme.

The catalysed reaction is H2O2 + AH2 = A + 2 H2O. It catalyses the reaction 2 H2O2 = O2 + 2 H2O. In terms of biological role, bifunctional enzyme with both catalase and broad-spectrum peroxidase activity. The polypeptide is Catalase-peroxidase (Synechococcus elongatus (strain ATCC 33912 / PCC 7942 / FACHB-805) (Anacystis nidulans R2)).